The primary structure comprises 418 residues: Probable mitochondrial adenine nucleotide transporter BTL2 (418 aa).

Solcar repeat units follow at residues 122 to 205 (MNTR…YRKQ), 215 to 300 (ATNF…LKSS), and 329 to 414 (LGPI…MKIV). 6 helical membrane passes run 127 to 147 (HLWA…PLER), 180 to 200 (GNLL…CAYD), 221 to 241 (FVAG…LDTI), 276 to 296 (LVPS…VYDI), 335 to 355 (LMYG…FEVV), and 383 to 403 (IPAL…SASI).

This sequence belongs to the mitochondrial carrier (TC 2.A.29) family.

The protein localises to the mitochondrion inner membrane. Probable mitochondrial adenylate carrier that catalyzes the transport of ATP, ADP and AMP. The chain is Probable mitochondrial adenine nucleotide transporter BTL2 from Arabidopsis thaliana (Mouse-ear cress).